A 201-amino-acid polypeptide reads, in one-letter code: Histidine biosynthesis bifunctional protein HisIE (201 aa).

A phosphoribosyl-AMP cyclohydrolase region spans residues 1–114; the sequence is MLTAQQIEKL…FAPAQTEWGF (114 aa). A phosphoribosyl-ATP pyrophosphohydrolase region spans residues 115 to 201; sequence LYQLEKLLAS…SCVIRRLRER (87 aa).

This sequence in the N-terminal section; belongs to the PRA-CH family. It in the C-terminal section; belongs to the PRA-PH family.

It is found in the cytoplasm. It catalyses the reaction 1-(5-phospho-beta-D-ribosyl)-ATP + H2O = 1-(5-phospho-beta-D-ribosyl)-5'-AMP + diphosphate + H(+). It carries out the reaction 1-(5-phospho-beta-D-ribosyl)-5'-AMP + H2O = 1-(5-phospho-beta-D-ribosyl)-5-[(5-phospho-beta-D-ribosylamino)methylideneamino]imidazole-4-carboxamide. It functions in the pathway amino-acid biosynthesis; L-histidine biosynthesis; L-histidine from 5-phospho-alpha-D-ribose 1-diphosphate: step 2/9. It participates in amino-acid biosynthesis; L-histidine biosynthesis; L-histidine from 5-phospho-alpha-D-ribose 1-diphosphate: step 3/9. The sequence is that of Histidine biosynthesis bifunctional protein HisIE from Photorhabdus laumondii subsp. laumondii (strain DSM 15139 / CIP 105565 / TT01) (Photorhabdus luminescens subsp. laumondii).